We begin with the raw amino-acid sequence, 224 residues long: UPF0758 protein CJA_3522 (224 aa).

One can recognise an MPN domain in the interval 102-224 (LLSSPHLVRD…LVSLAERGWL (123 aa)). Zn(2+)-binding residues include histidine 173, histidine 175, and aspartate 186. The JAMM motif motif lies at 173-186 (HNHPSGLAEPSQAD).

The protein belongs to the UPF0758 family.

In Cellvibrio japonicus (strain Ueda107) (Pseudomonas fluorescens subsp. cellulosa), this protein is UPF0758 protein CJA_3522.